We begin with the raw amino-acid sequence, 134 residues long: Large ribosomal subunit protein uL22 (134 aa).

Belongs to the universal ribosomal protein uL22 family. As to quaternary structure, part of the 50S ribosomal subunit.

Functionally, this protein binds specifically to 23S rRNA; its binding is stimulated by other ribosomal proteins, e.g. L4, L17, and L20. It is important during the early stages of 50S assembly. It makes multiple contacts with different domains of the 23S rRNA in the assembled 50S subunit and ribosome. The globular domain of the protein is located near the polypeptide exit tunnel on the outside of the subunit, while an extended beta-hairpin is found that lines the wall of the exit tunnel in the center of the 70S ribosome. In Karelsulcia muelleri (strain GWSS) (Sulcia muelleri), this protein is Large ribosomal subunit protein uL22.